Consider the following 942-residue polypeptide: MALTPMMVEYMKTKEEYNDCILFYRLGDFYEMFFDDALTVSRELELVLTGKNCGLEERAPMCGIPHHAAAAYIPRLVTKGYKVAICEQLEDPKQSKGIVKRGVVKVITPGTFIDSNSNLENDNTYLMVISEYEDKFGIAMSDISTGEFKTTSFNNIKMSLLDEISKVSPKEILVDININEELLTEINNVLPVLITKKDFNEFLVSKEELIEQFSDLEVSGLTIEREIPSKVLLKYINETQKMSLTNINLLEQYEIINYMTIDGNSRRNLELTESIREKTKKGSLLWVIDKSATSMGGRTLRKWIDEPLIVKDEIEKRLSGVEEVFNSIGFNEDLRSALKEIYDIERIVGKISNKNVNAKDLLSLKSSLDKLPCIKELLKNTSSELLKGYYENLDELIDVRDLLNDSIKEDPGLGLKEGNIIKDGYNNLVDELRESKLHGKEWIAALENREREFTGIKSLKVGYNKVFGYYIEISKSNYNSIPEGRYIRKQTLANAERFITEELKVMEDKILGSEEKLINLEYSIFVEIRDKIEEEISRLKKSARIISDLDGISTLALVALENDYIKPEINTDGLIKIIDGRHPVVEKVIGKGDFVSNNTALNQTDKELLLITGPNMAGKSTYMRQVALITLMAQMGSFVPATSANISICDKIFTRIGASDDLAGGKSTFMVEMWEVSNILKNATSNSLVLLDEVGRGTSTYDGLSIAWSVIEYITKNKDLRCKTLFATHYHELVKLEGILPGVKNYSVAVKKLKDSVVFLRKIVEGGADESYGIEVAKLAGLPENVINRAREILEDLEGKNTFDINKVSSCSMVSNNIKEIAVDSTKNSEDKVISNAQNIDVNETSCKDTTKEKILRVETQNAEYEEAIKSLKSEITKLQELNKKHNKKHKDVSNDNMQINFEVMEKENFIKELSEVDILGLNPMEAMNTLYRLVTDAKKLQ.

Gly-613–Ser-620 contributes to the ATP binding site.

The protein belongs to the DNA mismatch repair MutS family.

In terms of biological role, this protein is involved in the repair of mismatches in DNA. It is possible that it carries out the mismatch recognition step. This protein has a weak ATPase activity. The sequence is that of DNA mismatch repair protein MutS from Clostridium botulinum (strain Eklund 17B / Type B).